Here is a 238-residue protein sequence, read N- to C-terminus: Ribonuclease PH (238 aa).

Residues R86 and G124–R126 contribute to the phosphate site.

It belongs to the RNase PH family. As to quaternary structure, homohexameric ring arranged as a trimer of dimers.

The enzyme catalyses tRNA(n+1) + phosphate = tRNA(n) + a ribonucleoside 5'-diphosphate. Functionally, phosphorolytic 3'-5' exoribonuclease that plays an important role in tRNA 3'-end maturation. Removes nucleotide residues following the 3'-CCA terminus of tRNAs; can also add nucleotides to the ends of RNA molecules by using nucleoside diphosphates as substrates, but this may not be physiologically important. Probably plays a role in initiation of 16S rRNA degradation (leading to ribosome degradation) during starvation. In Shigella boydii serotype 18 (strain CDC 3083-94 / BS512), this protein is Ribonuclease PH.